The primary structure comprises 83 residues: DNA-directed RNA polymerase subunit Rpo5 (83 aa).

Belongs to the archaeal Rpo5/eukaryotic RPB5 RNA polymerase subunit family. In terms of assembly, part of the RNA polymerase complex.

The protein localises to the cytoplasm. The catalysed reaction is RNA(n) + a ribonucleoside 5'-triphosphate = RNA(n+1) + diphosphate. Its function is as follows. DNA-dependent RNA polymerase (RNAP) catalyzes the transcription of DNA into RNA using the four ribonucleoside triphosphates as substrates. The polypeptide is DNA-directed RNA polymerase subunit Rpo5 (Metallosphaera sedula (strain ATCC 51363 / DSM 5348 / JCM 9185 / NBRC 15509 / TH2)).